A 283-amino-acid chain; its full sequence is Bifunctional protein FolD (283 aa).

NADP(+) is bound by residues 159–161 (GRS), Ser184, and Ile225.

The protein belongs to the tetrahydrofolate dehydrogenase/cyclohydrolase family. In terms of assembly, homodimer.

The enzyme catalyses (6R)-5,10-methylene-5,6,7,8-tetrahydrofolate + NADP(+) = (6R)-5,10-methenyltetrahydrofolate + NADPH. It catalyses the reaction (6R)-5,10-methenyltetrahydrofolate + H2O = (6R)-10-formyltetrahydrofolate + H(+). It participates in one-carbon metabolism; tetrahydrofolate interconversion. In terms of biological role, catalyzes the oxidation of 5,10-methylenetetrahydrofolate to 5,10-methenyltetrahydrofolate and then the hydrolysis of 5,10-methenyltetrahydrofolate to 10-formyltetrahydrofolate. The polypeptide is Bifunctional protein FolD (Methanoculleus marisnigri (strain ATCC 35101 / DSM 1498 / JR1)).